The chain runs to 654 residues: DNA mismatch repair protein MutL (654 aa).

Residues 358–437 (KEHVRETMQQ…ADRRTDESLP (80 aa)) are disordered. Polar residues predominate over residues 384-394 (TSIGNSWSPSH). Residues 413-434 (RNERVETNTEEKYEQADRRTDE) show a composition bias toward basic and acidic residues.

It belongs to the DNA mismatch repair MutL/HexB family.

Functionally, this protein is involved in the repair of mismatches in DNA. It is required for dam-dependent methyl-directed DNA mismatch repair. May act as a 'molecular matchmaker', a protein that promotes the formation of a stable complex between two or more DNA-binding proteins in an ATP-dependent manner without itself being part of a final effector complex. This is DNA mismatch repair protein MutL from Shouchella clausii (strain KSM-K16) (Alkalihalobacillus clausii).